The sequence spans 225 residues: 2-C-methyl-D-erythritol 4-phosphate cytidylyltransferase (225 aa).

Belongs to the IspD/TarI cytidylyltransferase family. IspD subfamily.

It carries out the reaction 2-C-methyl-D-erythritol 4-phosphate + CTP + H(+) = 4-CDP-2-C-methyl-D-erythritol + diphosphate. The protein operates within isoprenoid biosynthesis; isopentenyl diphosphate biosynthesis via DXP pathway; isopentenyl diphosphate from 1-deoxy-D-xylulose 5-phosphate: step 2/6. Catalyzes the formation of 4-diphosphocytidyl-2-C-methyl-D-erythritol from CTP and 2-C-methyl-D-erythritol 4-phosphate (MEP). This is 2-C-methyl-D-erythritol 4-phosphate cytidylyltransferase from Haemophilus influenzae (strain PittEE).